The primary structure comprises 400 residues: Plasminogen activator inhibitor 1 (400 aa).

A signal peptide spans 1 to 21 (MQMSTVCLALGLALVFGEASA). Residues N230, N286, and N350 are each glycosylated (N-linked (GlcNAc...) asparagine).

It belongs to the serpin family. Forms a heterodimer with TMPRSS7. Interacts with VTN. Binds LRP1B; binding is followed by internalization and degradation. Interacts with PPP1CB. In complex with PLAU/uPA, interacts with PLAUR/uPAR. Interacts with SORL1 and LRP1, either alone or in complex with PLAU; these interactions are abolished in the presence of LRPAP1/RAP. The ternary complex composed of PLAUR-PLAU-PAI1 also interacts with SORL1. Interacts with PLAT/tPA. Also interacts with SORL1, when complexed to PLAT/tPA.

It localises to the secreted. In terms of biological role, serine protease inhibitor. Inhibits TMPRSS7. Is a primary inhibitor of tissue-type plasminogen activator (PLAT) and urokinase-type plasminogen activator (PLAU). As PLAT inhibitor, it is required for fibrinolysis down-regulation and is responsible for the controlled degradation of blood clots. As PLAU inhibitor, it is involved in the regulation of cell adhesion and spreading. Acts as a regulator of cell migration, independently of its role as protease inhibitor. It is required for stimulation of keratinocyte migration during cutaneous injury repair. It is involved in cellular and replicative senescence. Plays a role in alveolar type 2 cells senescence in the lung. Is involved in the regulation of cementogenic differentiation of periodontal ligament stem cells, and regulates odontoblast differentiation and dentin formation during odontogenesis. This is Plasminogen activator inhibitor 1 (SERPINE1) from Neovison vison (American mink).